The chain runs to 1040 residues: Multidrug resistance protein MdtB (1040 aa).

The next 12 helical transmembrane spans lie at 25–45 (LLMA…PVAA), 347–367 (LMLA…NIPA), 369–389 (IIPG…MVFL), 396–416 (LTLM…IVVI), 440–460 (IGFT…PLLF), 472–492 (FAVT…TLTP), 537–557 (WLTL…WIVI), 869–889 (LIVA…ESFI), 890–910 (HPIT…LALM), 911–931 (IAGS…IGIV), 968–988 (ILMT…STGV), and 998–1018 (IAMV…TPVI).

It belongs to the resistance-nodulation-cell division (RND) (TC 2.A.6) family. MdtB subfamily. As to quaternary structure, part of a tripartite efflux system composed of MdtA, MdtB and MdtC. MdtB forms a heteromultimer with MdtC.

Its subcellular location is the cell inner membrane. The chain is Multidrug resistance protein MdtB from Salmonella arizonae (strain ATCC BAA-731 / CDC346-86 / RSK2980).